Here is a 368-residue protein sequence, read N- to C-terminus: Tubby-like F-box protein 2 (368 aa).

Residues 1–17 (MVPWRRSSSSSSAPSSR) show a composition bias toward low complexity. Positions 1–44 (MVPWRRSSSSSSAPSSRPARRPARTNARVSPDVSSELSPLAGEE) are disordered. In terms of domain architecture, F-box spans 49 to 104 (ERWSALVPDLLADILRCVEAGSERWPPRRDVVACASVCRRWRDVAVAVVQPPLESG).

It belongs to the TUB family. As to expression, expressed in stems, leaves, flowers and seeds.

The chain is Tubby-like F-box protein 2 (TULP2) from Oryza sativa subsp. japonica (Rice).